A 72-amino-acid polypeptide reads, in one-letter code: Large ribosomal subunit protein bL31 (72 aa).

4 residues coordinate Zn(2+): cysteine 16, cysteine 18, cysteine 37, and cysteine 40.

This sequence belongs to the bacterial ribosomal protein bL31 family. Type A subfamily. As to quaternary structure, part of the 50S ribosomal subunit. The cofactor is Zn(2+).

Binds the 23S rRNA. This chain is Large ribosomal subunit protein bL31, found in Buchnera aphidicola subsp. Schizaphis graminum (strain Sg).